Here is a 26-residue protein sequence, read N- to C-terminus: Dermaseptin-B5 (26 aa).

Val-26 carries the valine amide modification.

This sequence belongs to the frog skin active peptide (FSAP) family. Dermaseptin subfamily. Expressed by the skin glands.

The protein resides in the secreted. Functionally, possesses a potent antimicrobial activity against Gram-positive and Gram-negative bacteria. Probably acts by disturbing membrane functions with its amphipathic structure. In Phyllomedusa bicolor (Two-colored leaf frog), this protein is Dermaseptin-B5.